A 278-amino-acid chain; its full sequence is Sulfur carrier protein FdhD (278 aa).

Cysteine 121 serves as the catalytic Cysteine persulfide intermediate. Position 260 to 265 (260 to 265 (FCKPGR)) interacts with Mo-bis(molybdopterin guanine dinucleotide).

Belongs to the FdhD family.

It is found in the cytoplasm. Required for formate dehydrogenase (FDH) activity. Acts as a sulfur carrier protein that transfers sulfur from IscS to the molybdenum cofactor prior to its insertion into FDH. The protein is Sulfur carrier protein FdhD of Salmonella paratyphi A (strain ATCC 9150 / SARB42).